The following is a 146-amino-acid chain: Angiogenin (146 aa).

The first 24 residues, 1 to 24 (MVMGLGLFLLVFMLGLGLTLPTLA), serve as a signal peptide directing secretion. Gln-25 carries the post-translational modification Pyrrolidone carboxylic acid. His-37 functions as the Proton acceptor in the catalytic mechanism. Arg-45 serves as a coordination point for tRNA. Cystine bridges form between Cys-50–Cys-105, Cys-63–Cys-116, and Cys-81–Cys-131. The short motif at 55–59 (RRRHL) is the Nucleolar localization signal element. TRNA contacts are provided by Cys-105 and Ile-127. Residue His-138 is the Proton donor of the active site.

It belongs to the pancreatic ribonuclease family. As to quaternary structure, homodimer. Interacts with RNH1; inhibiting ANG ribonuclease activity. Interacts with PCNA.

It localises to the secreted. The protein localises to the nucleus. The protein resides in the nucleolus. It is found in the cytoplasm. Its subcellular location is the stress granule. With respect to regulation, has weak tRNA ribonuclease activity by itself due to partial autoinhibition by its C-terminus, which folds into a short alpha-helix that partially occludes the substrate-binding site. In absence of stress, the ribonuclease activity is inhibited by RNH1 in the cytoplasm. In response to stress, dissociates from RNH1 in the cytoplasm and associates with cytoplasmic ribosomes with vacant A-sites: ribosomes directly activate the tRNA ribonuclease activity of ANG by refolding the C-terminal alpha-helix. In response to stress, the angiogenic activity of ANG is inhibited by RNH1 in the nucleus. Secreted ribonuclease that can either promote or restrict cell proliferation of target cells, depending on the context. Endocytosed in target cells via its receptor PLXNB2 and translocates to the cytoplasm or nucleus. Under stress conditions, localizes to the cytoplasm and promotes the assembly of stress granules (SGs): specifically cleaves a subset of tRNAs within anticodon loops to produce tRNA-derived stress-induced fragments (tiRNAs), resulting in translation repression and inhibition of cell proliferation. tiRNas also prevent formation of apoptosome, thereby promoting cell survival. Preferentially cleaves RNAs between a pyrimidine and an adenosine residue, suggesting that it cleaves the anticodon loop of tRNA(Ala) (32-UUAGCAU-38) after positions 33 and 36. Cleaves a subset of tRNAs, including tRNA(Ala), tRNA(Glu), tRNA(Gly), tRNA(Lys), tRNA(Val), tRNA(His), tRNA(Asp) and tRNA(Sec). Under growth conditions and in differentiated cells, translocates to the nucleus and stimulates ribosomal RNA (rRNA) transcription, including that containing the initiation site sequences of 45S rRNA, thereby promoting cell growth and proliferation. Angiogenin induces vascularization of normal and malignant tissues via its ability to promote rRNA transcription. Involved in hematopoietic stem and progenitor cell (HSPC) growth and survival by promoting rRNA transcription in growth conditions and inhibiting translation in response to stress, respectively. Mediates the crosstalk between myeloid and intestinal epithelial cells to protect the intestinal epithelial barrier integrity: secreted by myeloid cells and promotes intestinal epithelial cells proliferation and survival. Also mediates osteoclast-endothelial cell crosstalk in growing bone: produced by osteoclasts and protects the neighboring vascular cells against senescence by promoting rRNA transcription. The polypeptide is Angiogenin (ANG) (Papio hamadryas (Hamadryas baboon)).